Consider the following 100-residue polypeptide: uncharacterized protein (100 aa).

Residues Pro-65–Phe-96 are a coiled coil.

This is an uncharacterized protein from Acidianus filamentous virus 2 (isolate Italy/Pozzuoli) (AFV-2).